The following is an 87-amino-acid chain: MAHHKSALKRIKQNKKKYLRNKHIRSTLRTFIKRVREAVEAKNADQARQALLAAIPVIDKAASKGVIHASNASRNVSRLTKLVNTLG.

The protein belongs to the bacterial ribosomal protein bS20 family.

Binds directly to 16S ribosomal RNA. This is Small ribosomal subunit protein bS20 from Geobacter sulfurreducens (strain ATCC 51573 / DSM 12127 / PCA).